The primary structure comprises 217 residues: Probable transaldolase (217 aa).

Lys-83 functions as the Schiff-base intermediate with substrate in the catalytic mechanism.

Belongs to the transaldolase family. Type 3B subfamily.

It is found in the cytoplasm. It catalyses the reaction D-sedoheptulose 7-phosphate + D-glyceraldehyde 3-phosphate = D-erythrose 4-phosphate + beta-D-fructose 6-phosphate. Its pathway is carbohydrate degradation; pentose phosphate pathway; D-glyceraldehyde 3-phosphate and beta-D-fructose 6-phosphate from D-ribose 5-phosphate and D-xylulose 5-phosphate (non-oxidative stage): step 2/3. Functionally, transaldolase is important for the balance of metabolites in the pentose-phosphate pathway. In Aquifex aeolicus (strain VF5), this protein is Probable transaldolase (tal).